The sequence spans 283 residues: MEMO1 family protein DKAM_1357 (283 aa).

Belongs to the MEMO1 family.

The polypeptide is MEMO1 family protein DKAM_1357 (Desulfurococcus amylolyticus (strain DSM 18924 / JCM 16383 / VKM B-2413 / 1221n) (Desulfurococcus kamchatkensis)).